Reading from the N-terminus, the 341-residue chain is tRNA N6-adenosine threonylcarbamoyltransferase (341 aa).

Residues His111 and His115 each coordinate Fe cation. Residues 134-138, Asp167, Gly180, and Asn276 contribute to the substrate site; that span reads LVSGG. Asp304 provides a ligand contact to Fe cation.

Belongs to the KAE1 / TsaD family. Fe(2+) serves as cofactor.

Its subcellular location is the cytoplasm. It carries out the reaction L-threonylcarbamoyladenylate + adenosine(37) in tRNA = N(6)-L-threonylcarbamoyladenosine(37) in tRNA + AMP + H(+). Functionally, required for the formation of a threonylcarbamoyl group on adenosine at position 37 (t(6)A37) in tRNAs that read codons beginning with adenine. Is involved in the transfer of the threonylcarbamoyl moiety of threonylcarbamoyl-AMP (TC-AMP) to the N6 group of A37, together with TsaE and TsaB. TsaD likely plays a direct catalytic role in this reaction. The chain is tRNA N6-adenosine threonylcarbamoyltransferase from Pseudomonas putida (strain W619).